A 142-amino-acid chain; its full sequence is UPF0332 protein PH1297 (142 aa).

Belongs to the UPF0332 family.

This Pyrococcus horikoshii (strain ATCC 700860 / DSM 12428 / JCM 9974 / NBRC 100139 / OT-3) protein is UPF0332 protein PH1297.